Consider the following 184-residue polypeptide: Uroplakin-2 (184 aa).

Positions 1 to 25 are cleaved as a signal peptide; the sequence is MASPLPVRTLPLILILLAVLAPGAS. A propeptide spanning residues 26 to 84 is cleaved from the precursor; that stretch reads DFNISSLSGPLSPALTESLLVALPPCHLTGGNATLMVRRANDSKVVKSSFMVPPCRGRR. N-linked (GlcNAc...) asparagine glycans are attached at residues Asn-28, Asn-57, and Asn-66. Over 85 to 155 the chain is Lumenal; that stretch reads ELVSVVDSGS…IGLGMARTGG (71 aa). Residues 156 to 180 traverse the membrane as a helical segment; that stretch reads MVVITVLLSVAMFLLVVGFITALAL. Residues 181–184 lie on the Cytoplasmic side of the membrane; sequence GARK.

Belongs to the uroplakin-2 family. In terms of assembly, interacts with uroplakin-1a (UPK1A). Expressed only in the urothelium. Localizes to urothelial superficial cells.

The protein resides in the cell membrane. In terms of biological role, component of the asymmetric unit membrane (AUM); a highly specialized biomembrane elaborated by terminally differentiated urothelial cells. May play an important role in regulating the assembly of the AUM. The polypeptide is Uroplakin-2 (UPK2) (Sus scrofa (Pig)).